The primary structure comprises 301 residues: GTPase Era (301 aa).

Residues arginine 11 to asparagine 180 form the Era-type G domain. Residues glycine 19 to serine 26 are G1. Glycine 19 to serine 26 contributes to the GTP binding site. Residues glutamine 45–arginine 49 form a G2 region. Positions aspartate 66 to glycine 69 are G3. GTP is bound by residues aspartate 66–isoleucine 70 and threonine 129–aspartate 132. Positions threonine 129–aspartate 132 are G4. The G5 stretch occupies residues valine 159–alanine 161. The region spanning leucine 210 to lysine 286 is the KH type-2 domain.

Belongs to the TRAFAC class TrmE-Era-EngA-EngB-Septin-like GTPase superfamily. Era GTPase family. In terms of assembly, monomer.

It is found in the cytoplasm. It localises to the cell membrane. Functionally, an essential GTPase that binds both GDP and GTP, with rapid nucleotide exchange. Plays a role in 16S rRNA processing and 30S ribosomal subunit biogenesis and possibly also in cell cycle regulation and energy metabolism. This chain is GTPase Era, found in Tropheryma whipplei (strain TW08/27) (Whipple's bacillus).